Reading from the N-terminus, the 553-residue chain is MDISYPVINAGGLKNIASQIIMEIELDKRENRPTDNVPPDDIGKIEVVDDAEMEQFYGSSTTDAYRLKSELVSQCMADIGMGRFQWKLFTVAGFGWIVDNFCSQGISAVQPPIQQEFSGIKQVSYSSVAYYVGMIIGASFWGISSDLIGRKPAFNSTLAIAGIFLCAAAGTSNFIAFSALWAVIGTAAGGNVVCDSMILLEFIPGSHQYLLTALSGWWNLGQLVVSLLAWVFLANFSCPTDATPDTCSRADNMGWRYTLITLGGLSLAFTFVRIFVFKMPETPRYLLSQGNDQAAVDAVNYVARQNGKPEPLTLSMLQAIDVRLGFTPNAEERLSTKDILKENMQEFRGEHYQALFATRKLSQHTALIWAVWLIIGIAYPLYFNFLPSYLATRFTQDSSLDLTYRNYCIQSAVGVVGPLSAAVLVNTFLGRRWMMGISSIVTGVFLFAYVGVKTPMSSLAFSCVTGLLANFANQLSEYAIMYAFTPESFPAPHRGTASGTAASLLRFGGLVASLIASETGFTTAPIYASAALWVGVGVLCFGLPFETHGHAAI.

5 consecutive transmembrane segments (helical) span residues 89 to 109 (FTVA…ISAV), 128 to 148 (VAYY…SDLI), 152 to 172 (PAFN…AGTS), 174 to 194 (FIAF…NVVC), and 213 to 233 (ALSG…WVFL). N-linked (GlcNAc...) asparagine glycosylation occurs at N235. The next 7 helical transmembrane spans lie at 257 to 277 (YTLI…IFVF), 366 to 386 (ALIW…FNFL), 409 to 429 (IQSA…NTFL), 433 to 453 (WMMG…VGVK), 459 to 481 (LAFS…YAIM), 496 to 516 (TASG…SLIA), and 525 to 545 (PIYA…GLPF).

This sequence belongs to the major facilitator superfamily.

The protein resides in the cell membrane. Major facilitator-type transporter, part of the hnx cluster involved in the purine degradation. The nicotinate hydroxylase hnxS accepts nicotinate as a substrate and catalyzes the first step of nicotinate catabolism. The major facilitator-type transporters hxnP and hxnZ are probably involved in the uptake of nicotinate-derived metabolites, and the oxidoreductases hxnT and hxnY in the further metabolism of 6-OH nicotinic acid. The protein is Major facilitator-type transporter hxnZ of Emericella nidulans (strain FGSC A4 / ATCC 38163 / CBS 112.46 / NRRL 194 / M139) (Aspergillus nidulans).